Consider the following 259-residue polypeptide: Proteasome subunit alpha (259 aa).

A disordered region spans residues 222 to 259; that stretch reads RITGPALEQLIPAEPAPASEPAPESKPDTETKPADPQD. The span at 244–259 shows a compositional bias: basic and acidic residues; it reads PESKPDTETKPADPQD.

The protein belongs to the peptidase T1A family. As to quaternary structure, the 20S proteasome core is composed of 14 alpha and 14 beta subunits that assemble into four stacked heptameric rings, resulting in a barrel-shaped structure. The two inner rings, each composed of seven catalytic beta subunits, are sandwiched by two outer rings, each composed of seven alpha subunits. The catalytic chamber with the active sites is on the inside of the barrel. Has a gated structure, the ends of the cylinder being occluded by the N-termini of the alpha-subunits. Is capped by the proteasome-associated ATPase, ARC.

It localises to the cytoplasm. It participates in protein degradation; proteasomal Pup-dependent pathway. With respect to regulation, the formation of the proteasomal ATPase ARC-20S proteasome complex, likely via the docking of the C-termini of ARC into the intersubunit pockets in the alpha-rings, may trigger opening of the gate for substrate entry. Interconversion between the open-gate and close-gate conformations leads to a dynamic regulation of the 20S proteasome proteolysis activity. In terms of biological role, component of the proteasome core, a large protease complex with broad specificity involved in protein degradation. In Rhodococcus jostii (strain RHA1), this protein is Proteasome subunit alpha.